Consider the following 159-residue polypeptide: Phosphopantetheine adenylyltransferase (159 aa).

Residue Ser9 participates in substrate binding. ATP contacts are provided by residues 9–10 (SF) and His17. The substrate site is built by Lys41, Leu73, and Lys87. ATP contacts are provided by residues 88–90 (GLR), Glu98, and 123–129 (NIHISSS).

Belongs to the bacterial CoaD family. Homohexamer. Mg(2+) is required as a cofactor.

The protein localises to the cytoplasm. It carries out the reaction (R)-4'-phosphopantetheine + ATP + H(+) = 3'-dephospho-CoA + diphosphate. The protein operates within cofactor biosynthesis; coenzyme A biosynthesis; CoA from (R)-pantothenate: step 4/5. Functionally, reversibly transfers an adenylyl group from ATP to 4'-phosphopantetheine, yielding dephospho-CoA (dPCoA) and pyrophosphate. The chain is Phosphopantetheine adenylyltransferase from Clostridium beijerinckii (strain ATCC 51743 / NCIMB 8052) (Clostridium acetobutylicum).